A 286-amino-acid polypeptide reads, in one-letter code: MSGGLDILRLTADDVSKMLAASAHLGTTNVDYQMEQYVFRRRTDGVHIIDLRQTWEKLLIAARIIASIENPADVCVLSARPYGQRAVLKFAKFTGASPIAGRFTPGTFTNQIQKAYREPRLLIVTDPRVDHQPITEASYVNIPVIAFCNTDSRLRYIDVGIPCNNKGAHAIGLMWWLLAREVLRLRGTISRDTDWEHMPDLFFYRDPEEVEKEEQAQNNKWAAPEQSPALSAAVPSSAAPVEEWSSSPSKETTEWGASNTAAAAKSSWSNETGGEWGAQEGGEWGS.

The tract at residues 213–286 (EEQAQNNKWA…GAQEGGEWGS (74 aa)) is disordered. Positions 227 to 241 (SPALSAAVPSSAAPV) are enriched in low complexity. The segment covering 244–270 (WSSSPSKETTEWGASNTAAAAKSSWSN) has biased composition (polar residues). The span at 274–286 (GEWGAQEGGEWGS) shows a compositional bias: gly residues.

This sequence belongs to the universal ribosomal protein uS2 family. As to quaternary structure, component of the small ribosomal subunit. Mature ribosomes consist of a small (40S) and a large (60S) subunit. The 40S subunit contains about 33 different proteins and 1 molecule of RNA (18S). The 60S subunit contains about 49 different proteins and 3 molecules of RNA (28S, 5.8S and 5S). Interacts with ribosomal protein S21.

It localises to the cytoplasm. In terms of biological role, required for the assembly and/or stability of the 40S ribosomal subunit. Required for the processing of the 20S rRNA-precursor to mature 18S rRNA in a late step of the maturation of 40S ribosomal subunits. The protein is Small ribosomal subunit protein uS2 of Trichoplax adhaerens (Trichoplax reptans).